Reading from the N-terminus, the 127-residue chain is Large ribosomal subunit protein bL20 (127 aa).

Belongs to the bacterial ribosomal protein bL20 family.

Its function is as follows. Binds directly to 23S ribosomal RNA and is necessary for the in vitro assembly process of the 50S ribosomal subunit. It is not involved in the protein synthesizing functions of that subunit. The chain is Large ribosomal subunit protein bL20 from Opitutus terrae (strain DSM 11246 / JCM 15787 / PB90-1).